A 242-amino-acid chain; its full sequence is MIKEINIKIKNFEGPLDLLLHLVSQYEMDIFEVPLVPVIEQYLIYIQTMKELELELAGEYMLMASQLMLIKSRRLLPTVTETFIEDTEQLEYDLLAQIDEYRKYKMLSEDLDELHQERSHYYSKSKTEIITDETVLLQDKTALDLFLAFSKILELQRQQIEDDNTTIAAEKFTIADKIFELNQRFTEQKICKFTDLFSDKTKKDELVTTFMALLELIKNQQVSFSQGELFGEIILERKEISE.

Belongs to the ScpA family. As to quaternary structure, component of a cohesin-like complex composed of ScpA, ScpB and the Smc homodimer, in which ScpA and ScpB bind to the head domain of Smc. The presence of the three proteins is required for the association of the complex with DNA.

The protein resides in the cytoplasm. In terms of biological role, participates in chromosomal partition during cell division. May act via the formation of a condensin-like complex containing Smc and ScpB that pull DNA away from mid-cell into both cell halves. The chain is Segregation and condensation protein A from Lactococcus lactis subsp. cremoris (strain SK11).